A 218-amino-acid polypeptide reads, in one-letter code: Small ribosomal subunit protein uS3c (218 aa).

Residues 47-118 (VRRHMKNYSN…KLNISIAKVA (72 aa)) enclose the KH type-2 domain.

Belongs to the universal ribosomal protein uS3 family. As to quaternary structure, part of the 30S ribosomal subunit.

Its subcellular location is the plastid. It localises to the chloroplast. This Ginkgo biloba (Ginkgo) protein is Small ribosomal subunit protein uS3c (rps3).